The sequence spans 452 residues: Major royal jelly protein 2 (452 aa).

The signal sequence occupies residues methionine 1–glycine 17. Residues asparagine 145 and asparagine 178 are each glycosylated (N-linked (GlcNAc...) asparagine). Positions asparagine 416–asparagine 452 are disordered.

Post-translationally, N-linked core structure contains mannose (which consists of 8-alpha-mannosyl residues, one beta-mannosyl residue, and chitobiose). As to expression, secreted from the hypopharyngeal glands of the worker honey bee (at protein level); expression peaks at 12 days post eclosion. Expressed in the brains of adult worker bees peaking at 12 days post eclosion (at protein level). Expressed in the spermatheca of adult queen bees (at protein level); Expression levels are higher in mated queens than in virgin queens.

It is found in the secreted. Highly abundant protein component of royal jelly, a substance produced in the hypopharyngeal gland containing proteins, free amino acids, fatty acids, sugars and other nutrients, which is fed to developing larvae by worker nurse bees. Major royal jelly proteins (MRJPs) are high in essential amino acids and probably have a nutritional function in larval food. All larvae are fed some royal jelly (also known as worker jelly) early in their development but it forms the principal source of nutrition for larvae destined to become queen bees. Produced in the spermatheca of adult queen bees, along with other major royal jelly proteins, where it may act as a nutrient supply for sperm stored by mated queens, or be involved in energy metabolism. The polypeptide is Major royal jelly protein 2 (Apis mellifera (Honeybee)).